A 97-amino-acid polypeptide reads, in one-letter code: Acylphosphatase (97 aa).

One can recognise an Acylphosphatase-like domain in the interval 9–95 (TRHLRIHGLV…CDAQGFEQRE (87 aa)). Residues arginine 24 and asparagine 42 contribute to the active site.

Belongs to the acylphosphatase family.

The enzyme catalyses an acyl phosphate + H2O = a carboxylate + phosphate + H(+). This Acidovorax sp. (strain JS42) protein is Acylphosphatase (acyP).